The sequence spans 287 residues: ATP synthase gamma chain (287 aa).

The protein belongs to the ATPase gamma chain family. F-type ATPases have 2 components, CF(1) - the catalytic core - and CF(0) - the membrane proton channel. CF(1) has five subunits: alpha(3), beta(3), gamma(1), delta(1), epsilon(1). CF(0) has three main subunits: a, b and c.

The protein resides in the cell inner membrane. In terms of biological role, produces ATP from ADP in the presence of a proton gradient across the membrane. The gamma chain is believed to be important in regulating ATPase activity and the flow of protons through the CF(0) complex. This is ATP synthase gamma chain from Geotalea daltonii (strain DSM 22248 / JCM 15807 / FRC-32) (Geobacter daltonii).